A 273-amino-acid polypeptide reads, in one-letter code: Putative pyruvate, phosphate dikinase regulatory protein (273 aa).

153-160 (GISRTSKT) lines the ADP pocket.

Belongs to the pyruvate, phosphate/water dikinase regulatory protein family. PDRP subfamily.

It catalyses the reaction N(tele)-phospho-L-histidyl/L-threonyl-[pyruvate, phosphate dikinase] + ADP = N(tele)-phospho-L-histidyl/O-phospho-L-threonyl-[pyruvate, phosphate dikinase] + AMP + H(+). The enzyme catalyses N(tele)-phospho-L-histidyl/O-phospho-L-threonyl-[pyruvate, phosphate dikinase] + phosphate + H(+) = N(tele)-phospho-L-histidyl/L-threonyl-[pyruvate, phosphate dikinase] + diphosphate. Its function is as follows. Bifunctional serine/threonine kinase and phosphorylase involved in the regulation of the pyruvate, phosphate dikinase (PPDK) by catalyzing its phosphorylation/dephosphorylation. This Agrobacterium fabrum (strain C58 / ATCC 33970) (Agrobacterium tumefaciens (strain C58)) protein is Putative pyruvate, phosphate dikinase regulatory protein.